An 84-amino-acid chain; its full sequence is Small ribosomal subunit protein bS20 (84 aa).

Positions 1–28 (MPNIKSAIKRVKTADTRNSRNASQRSAM) are disordered.

Belongs to the bacterial ribosomal protein bS20 family.

Binds directly to 16S ribosomal RNA. This chain is Small ribosomal subunit protein bS20, found in Listeria welshimeri serovar 6b (strain ATCC 35897 / DSM 20650 / CCUG 15529 / CIP 8149 / NCTC 11857 / SLCC 5334 / V8).